Here is a 290-residue protein sequence, read N- to C-terminus: ATP synthase gamma chain (290 aa).

The protein belongs to the ATPase gamma chain family. F-type ATPases have 2 components, CF(1) - the catalytic core - and CF(0) - the membrane proton channel. CF(1) has five subunits: alpha(3), beta(3), gamma(1), delta(1), epsilon(1). CF(0) has three main subunits: a, b and c.

Its subcellular location is the cell inner membrane. Its function is as follows. Produces ATP from ADP in the presence of a proton gradient across the membrane. The gamma chain is believed to be important in regulating ATPase activity and the flow of protons through the CF(0) complex. The protein is ATP synthase gamma chain of Thiobacillus denitrificans (strain ATCC 25259 / T1).